The primary structure comprises 290 residues: Phosphoribulokinase 1 (290 aa).

12–20 (GSSGAGTST) provides a ligand contact to ATP.

Belongs to the phosphoribulokinase family. Homooctamer.

It catalyses the reaction D-ribulose 5-phosphate + ATP = D-ribulose 1,5-bisphosphate + ADP + H(+). Its pathway is carbohydrate biosynthesis; Calvin cycle. With respect to regulation, activated by NADH and inhibited by phosphoenolpyruvate. The protein is Phosphoribulokinase 1 (prkA) of Cereibacter sphaeroides (Rhodobacter sphaeroides).